The following is a 62-amino-acid chain: Sperm protamine P1 (62 aa).

A disordered region spans residues 1 to 62 (MARYRRHSRS…RRYSRRRRRY (62 aa)).

Belongs to the protamine P1 family. Testis.

Its subcellular location is the nucleus. It is found in the chromosome. Its function is as follows. Protamines substitute for histones in the chromatin of sperm during the haploid phase of spermatogenesis. They compact sperm DNA into a highly condensed, stable and inactive complex. In Sminthopsis longicaudata (Long-tailed dunnart), this protein is Sperm protamine P1 (PRM1).